We begin with the raw amino-acid sequence, 288 residues long: Xyloglucan endotransglucosylase protein 8 (288 aa).

An N-terminal signal peptide occupies residues 1–25; sequence MAASPYSIFAVQLLLLASWMLSSSS. In terms of domain architecture, GH16 spans 26–215; sequence SNFNQDFNIA…WTQAPFTTSY (190 aa). Catalysis depends on Glu-102, which acts as the Nucleophile. Residue Glu-106 is the Proton donor of the active site. Residue Glu-106 coordinates xyloglucan. Asn-110 carries N-linked (GlcNAc...) asparagine glycosylation. Residues 119-121, 129-131, 194-195, and Gly-199 each bind xyloglucan; these read HTN, ERE, and EW. 2 disulfides stabilise this stretch: Cys-224-Cys-233 and Cys-268-Cys-282. Arg-273 is a xyloglucan binding site.

This sequence belongs to the glycosyl hydrolase 16 family. XTH group 2 subfamily. In terms of processing, contains at least one intrachain disulfide bond essential for its enzymatic activity. Highly expressed in mature fruits. Very low expression in leaves, flowers, calyces and stems.

It is found in the secreted. The protein localises to the cell wall. The protein resides in the extracellular space. It localises to the apoplast. It carries out the reaction breaks a beta-(1-&gt;4) bond in the backbone of a xyloglucan and transfers the xyloglucanyl segment on to O-4 of the non-reducing terminal glucose residue of an acceptor, which can be a xyloglucan or an oligosaccharide of xyloglucan.. In terms of biological role, catalyzes xyloglucan endotransglycosylation (XET). Cleaves and religates xyloglucan polymers. Does not catalyze xyloglucan endohydrolysis (XEH). Overexpression in Arabidopsis transgenic plants causes accelerated dark-induced leaf senescence and higher lipid peroxidation of the leaf cells. Overexpression in transgenic tomato plants promotes fruit ripening and softening. Probably involved in cell wall restructuring during postharvest fruit softening. This Diospyros kaki (Kaki persimmon) protein is Xyloglucan endotransglucosylase protein 8.